Consider the following 380-residue polypeptide: Cytochrome b (380 aa).

4 helical membrane passes run 33–53 (FGSLLGLCLIAQILTGLFLAM), 77–98 (WLIRNLHANGASFFFICLYLHV), 113–133 (WNIGVVLLLLVMMTAFVGYVL), and 178–198 (FFAFHFLFPFIIAAMVLLHLL). The heme b site is built by His-83 and His-97. Residues His-182 and His-196 each contribute to the heme b site. His-201 contacts a ubiquinone. Transmembrane regions (helical) follow at residues 226 to 246 (YKDLFGFVILLLALSILTLFS), 288 to 308 (LGGVLALLASILILMVVPLLH), 320 to 340 (LTQILFWTLVADVAILTWIGG), and 347 to 367 (FITVGQVASVLYFALFLILIP).

It belongs to the cytochrome b family. As to quaternary structure, the cytochrome bc1 complex contains 3 respiratory subunits (MT-CYB, CYC1 and UQCRFS1), 2 core proteins (UQCRC1 and UQCRC2) and probably 6 low-molecular weight proteins. Heme b serves as cofactor.

The protein localises to the mitochondrion inner membrane. Its function is as follows. Component of the ubiquinol-cytochrome c reductase complex (complex III or cytochrome b-c1 complex) that is part of the mitochondrial respiratory chain. The b-c1 complex mediates electron transfer from ubiquinol to cytochrome c. Contributes to the generation of a proton gradient across the mitochondrial membrane that is then used for ATP synthesis. The polypeptide is Cytochrome b (mt-cyb) (Allocyttus niger (Black oreo dory)).